A 219-amino-acid polypeptide reads, in one-letter code: Kappa-scoloptoxin(11)-Ss1a (219 aa).

Positions 1 to 16 (MFYSHLLFFTFTFACS) are cleaved as a signal peptide. Positions 17–25 (SSLNRKTKR) are excised as a propeptide.

Post-translationally, contains 8 disulfide bonds. As to expression, expressed by the venom gland.

It is found in the secreted. Its function is as follows. Voltage-gated potassium channel inhibitor. The polypeptide is Kappa-scoloptoxin(11)-Ss1a (Scolopendra dehaani (Thai centipede)).